We begin with the raw amino-acid sequence, 374 residues long: Alginate lyase (374 aa).

The N-terminal stretch at 1 to 23 (MHKTRLALSCLLGSLLLSGAVHA) is a signal peptide. Substrate contacts are provided by residues 62–63 (SK), 135–136 (HT), and tyrosine 253.

This sequence belongs to the polysaccharide lyase 5 family.

Its subcellular location is the periplasm. The enzyme catalyses Eliminative cleavage of alginate to give oligosaccharides with 4-deoxy-alpha-L-erythro-hex-4-enuronosyl groups at their non-reducing ends and beta-D-mannuronate at their reducing end.. Its function is as follows. Catalyzes the depolymerization of alginate by cleaving the beta-1,4 glycosidic bond between two adjacent sugar residues via a beta-elimination mechanism. May serve to degrade mislocalized alginate that is trapped in the periplasmic space. This chain is Alginate lyase, found in Azotobacter vinelandii (strain DJ / ATCC BAA-1303).